The chain runs to 289 residues: 4-diphosphocytidyl-2-C-methyl-D-erythritol kinase (289 aa).

The active site involves Lys-10. Position 94 to 104 (94 to 104) interacts with ATP; that stretch reads PVAAGLAGGSS. The active site involves Asp-136.

The protein belongs to the GHMP kinase family. IspE subfamily.

The catalysed reaction is 4-CDP-2-C-methyl-D-erythritol + ATP = 4-CDP-2-C-methyl-D-erythritol 2-phosphate + ADP + H(+). It participates in isoprenoid biosynthesis; isopentenyl diphosphate biosynthesis via DXP pathway; isopentenyl diphosphate from 1-deoxy-D-xylulose 5-phosphate: step 3/6. Its function is as follows. Catalyzes the phosphorylation of the position 2 hydroxy group of 4-diphosphocytidyl-2C-methyl-D-erythritol. The protein is 4-diphosphocytidyl-2-C-methyl-D-erythritol kinase of Bacillus velezensis (strain DSM 23117 / BGSC 10A6 / LMG 26770 / FZB42) (Bacillus amyloliquefaciens subsp. plantarum).